Reading from the N-terminus, the 406-residue chain is Tryptophan 2,3-dioxygenase A (406 aa).

Residues 71 to 75 (FIVTH) and Arg143 each bind substrate. Residue His327 participates in heme binding. Residue Thr341 coordinates substrate.

It belongs to the tryptophan 2,3-dioxygenase family. As to quaternary structure, homotetramer. Dimer of dimers. Heme is required as a cofactor.

It catalyses the reaction L-tryptophan + O2 = N-formyl-L-kynurenine. It functions in the pathway amino-acid degradation; L-tryptophan degradation via kynurenine pathway; L-kynurenine from L-tryptophan: step 1/2. Heme-dependent dioxygenase that catalyzes the oxidative cleavage of the L-tryptophan (L-Trp) pyrrole ring and converts L-tryptophan to N-formyl-L-kynurenine. Catalyzes the oxidative cleavage of the indole moiety. In Danio rerio (Zebrafish), this protein is Tryptophan 2,3-dioxygenase A.